We begin with the raw amino-acid sequence, 146 residues long: UPF0260 protein VP2169 (146 aa).

The protein belongs to the UPF0260 family.

The chain is UPF0260 protein VP2169 from Vibrio parahaemolyticus serotype O3:K6 (strain RIMD 2210633).